We begin with the raw amino-acid sequence, 98 residues long: Putative septation protein SpoVG (98 aa).

Belongs to the SpoVG family.

Could be involved in septation. The chain is Putative septation protein SpoVG from Alkaliphilus metalliredigens (strain QYMF).